We begin with the raw amino-acid sequence, 217 residues long: Adenylate kinase (217 aa).

10 to 15 provides a ligand contact to ATP; the sequence is GIGKGT. Residues 30–59 are NMP; the sequence is STGDIFRKNFKENTELGTLSKKFIAQGLLV. AMP contacts are provided by residues T31, R36, 57-59, 85-88, and Q92; these read LLV and GFPR. Residues 126–163 form an LID region; sequence GRRICPECGKVYHIEKIPPKNPGICDKDQKTLIQREDD. ATP is bound at residue R127. C130 and C133 together coordinate Zn(2+). 136–137 provides a ligand contact to ATP; sequence VY. The Zn(2+) site is built by C150 and D153. R160 and R171 together coordinate AMP. Residue Q199 participates in ATP binding.

It belongs to the adenylate kinase family. As to quaternary structure, monomer.

The protein resides in the cytoplasm. It catalyses the reaction AMP + ATP = 2 ADP. It functions in the pathway purine metabolism; AMP biosynthesis via salvage pathway; AMP from ADP: step 1/1. Catalyzes the reversible transfer of the terminal phosphate group between ATP and AMP. Plays an important role in cellular energy homeostasis and in adenine nucleotide metabolism. The sequence is that of Adenylate kinase from Aster yellows witches'-broom phytoplasma (strain AYWB).